Reading from the N-terminus, the 230-residue chain is Transmembrane 4 L6 family member 20 (230 aa).

Topologically, residues 1-11 are lumenal; the sequence is MTCCEGWTSCN. The helical transmembrane segment at 12–32 threads the bilayer; that stretch reads GFSLLVLLLLGVTLNAIPLIL. Residues 33 to 44 lie on the Cytoplasmic side of the membrane; that stretch reads NFVDEDQFFENP. A helical transmembrane segment spans residues 45–65; the sequence is ISCFEWWFPGIIGAGVMAIPA. Residues 66–83 are Lumenal-facing; that stretch reads TTMSLAARKRACCNNKTG. Residues 84-104 form a helical membrane-spanning segment; sequence MFLSSLLNAITVIGAAYCLLV. At 105–185 the chain is on the cytoplasmic side; it reads SIQALAEGPL…HFNSIENQHR (81 aa). A helical transmembrane segment spans residues 186 to 206; the sequence is IIHFSVFLGLLLVGILEILFG. Residues 207–230 are Lumenal-facing; it reads LSQIIIGFFGCLCGGVSNGRSQIV.

It belongs to the L6 tetraspanin family. In terms of processing, glycosylated at Asn-132 in presence of ceramide which inverts the orientation of TM4SF20 in membranes exposing these residues to the endoplasmic reticulum lumen. Post-translationally, cleaved by signal peptidase at Ser-14 but the peptide does not act as a signal peptide. Cleavage is inhibited by ceramide which inverts the orientation of TM4SF20 in membranes exposing the N-terminus to the cytosol and not to the endoplasmic reticulum lumen.

It localises to the membrane. Its subcellular location is the endoplasmic reticulum membrane. Polytopic transmembrane protein. Inhibits regulated intramembrane proteolysis (RIP) of CREB3L1, inhibiting its activation and the induction of collagen synthesis. In response to ceramide, which alters TM4SF20 membrane topology, stimulates RIP activation of CREB3L1. Ceramide reverses the direction through which transmembrane helices are translocated into the endoplasmic reticulum membrane during translation of TM4SF20, this mechanism is called 'regulated alternative translocation' (RAT) and regulates the function of the transmembrane protein. This chain is Transmembrane 4 L6 family member 20 (TM4SF20), found in Bos taurus (Bovine).